A 1052-amino-acid chain; its full sequence is MAGMDSGNLKTARLWRDAALRARKLRSNLRQLTLTAAGACPGAGADALESPASPQLVLPANLGDIEALNLGNNGLEEVPEGLGSALGSLRVLVLRRNRFARLPPAVAELGHHLTELDVSHNRLTALGAEVVSALRELRKLNLSHNQLPALPAQLGALAHLEELDVSFNRLAHLPDSLSCLSRLRTLDVDHNQLTAFPRQLLQLVALEELDVSSNRLRGLPEDISALRALKILWLSGAELGTLPAGFCELASLESLMLDNNGLQALPAQFSCLQRLKMLNLSSNLFEEFPAALLPLAGLEELYLSRNQLTSVPSLISGLGRLLTLWLDNNRIRYLPDSIVELTGLEELVLQGNQIAVLPDHFGQLSRVGLWKIKDNPLIQPPYEVCMKGIPYIAAYQKELAHSQPAVQPRLKLLLMGHKAAGKTLLRHCLTEERVEGCPGGGDKEKCYPPSPPPVSKGIEVTSWTADASRGLRFIVYDLAGDESYEVIQPFFLSPGALYVLVVNLATYEPRHFPTTVGSFLHRVGARVPHAVVCIVGTHADLCGERELEEKCLDIHRQIALQEKHDAEGLSRLAKVVDEALARDFELRSASPHAAYYGVSDKNLRRRKAHFQYLLNHRLQILSPVLPVSCRDPRHLRRLRDKLLSVAEHREIFPNLHRVLPRSWQVLEELHFQPPQAQRLWLSWWDSARLGLQAGLTEDRLQSALSYLHESGKLLYFEDSPALKEHVFHNLTRLIDILNVFFQRDPSLLLHKLLLGTSGEGKAEGESSPPMARSTPSQELLRATQLHQYVEGFLLHGLLPAHVIRLLLKPHVQAQQDLQLLLELLEKMGLCYCLNKPKGKPLNGSTAWYKFPCYVQNEVPHAEAWINGTNLAGQSFVAEQLQIEYSFPFTFPLGLFARYSVQINSHVVHRSDGKFQIFAYRGKVPVVVSYRPARGVLQPDTLSIASHASLPNIWTAWQAITPLVEELNVLLQEWPGLHYTVHILCSKCLKRGSPNPHAFPGELLSQPRPEGVAEIICPKNGSERVNVALVYPPTPTVISPCSKKNVGEKHRNQ.

An N-acetylalanine modification is found at Ala-2. 13 LRR repeats span residues 64–85, 88–109, 112–133, 136–157, 159–180, 182–203, 205–226, 228–249, 251–272, 274–296, 297–318, 320–341, and 343–364; these read DIEALNLGNNGLEEVPEGLGSA, SLRVLVLRRNRFARLPPAVAEL, HLTELDVSHNRLTALGAEVVSA, ELRKLNLSHNQLPALPAQLGAL, HLEELDVSFNRLAHLPDSLSCL, RLRTLDVDHNQLTAFPRQLLQL, ALEELDVSSNRLRGLPEDISAL, ALKILWLSGAELGTLPAGFCEL, SLESLMLDNNGLQALPAQFSCL, RLKMLNLSSNLFEEFPAALLPLA, GLEELYLSRNQLTSVPSLISGL, RLLTLWLDNNRIRYLPDSIVEL, and GLEELVLQGNQIAVLPDHFGQL. Positions 64–364 are required for interaction with PJA2; that stretch reads DIEALNLGNN…AVLPDHFGQL (301 aa). The tract at residues 64–649 is required for interaction with PPP2R2A; sequence DIEALNLGNN…DKLLSVAEHR (586 aa). Residues 403–649 form the Roc domain; it reads QPAVQPRLKL…DKLLSVAEHR (247 aa). Lys-601 carries the N6-acetyllysine modification.

Interacts with RAF1. Interacts with HSPD1. Interacts with PPP2CA; retains PPP2CA into the cytoplasm and excludes it from the nucleus. Interacts with PPP2R2A; the interaction is direct. Interacts with PJA2. Post-translationally, ubiquitinated. Ubiquitination by PJA2 does not lead MFHAS1 to proteasomal degradation but positively regulates its function in polarization of macrophages. As to expression, ubiquitously expressed. Overexpressed in malignant fibrous histiocytomas. Expressed in red blood cells (at protein level).

Its subcellular location is the cytoplasm. Its function is as follows. Probable GTP-binding protein. Functions in innate immunity and more specifically the inflammatory response as a regulator of the Toll-like receptor TLR2 and TLR4 signaling pathways. Negatively regulates the part of the TLR4 signaling pathway that leads to the activation of the transcription factor AP-1. By retaining the phosphatase complex PP2A into the cytoplasm, prevents the dephosphorylation of the AP-1 subunit JUN which is required for proper activation of the transcription factor. Both inhibits and activates the TLR2-dependent signaling pathway. Positively regulates the TLR2 signaling pathway to activate specifically the downstream p38 and JNK MAP kinases and promote the polarization of macrophages toward the pro-inflammatory M1 phenotype. It may also play a role in the regulation of inflammation induced by high glucose through the PKB/AKT signaling pathway. Also involved in erythrocyte differentiation through activation of the ERK1/ERK2 signaling pathway. This is Malignant fibrous histiocytoma-amplified sequence 1 from Homo sapiens (Human).